A 98-amino-acid chain; its full sequence is Integration host factor subunit beta (98 aa).

This sequence belongs to the bacterial histone-like protein family. In terms of assembly, heterodimer of an alpha and a beta chain.

In terms of biological role, this protein is one of the two subunits of integration host factor, a specific DNA-binding protein that functions in genetic recombination as well as in transcriptional and translational control. The sequence is that of Integration host factor subunit beta from Pseudomonas putida (strain W619).